The chain runs to 481 residues: MNTVSDLSKFVATRCAIADISLADFGRKEIAIAETEMPGLIAIRDEFAAQQPLRGTRITGSLHMTIQTAVLIETLEALGAEVQWASCNIFSTQDHAAAAIAANGTPVFAIKGETLEQYWDFTHRIFEWADGGYTNMILDDGGDATLLLHLGARAEKDQACLNHPTSEEETILFAAIKNKLAQDPTWYSTRLEKVKGVTEETTTGVHRLYQMFARGDLKFPAINVNDSVTKSKFDNLYGCRESLVDAIKRATDVMVAGKVAVVCGYGDVGKGSAQALRALSAQVWVTEVDPICALQAAMEGYRVVTMDYAADKADIFVSATGNYHVITHDHMAKMKDQAIVCNIGHFDNEIDVAGIEKYKWEEIKPQVDHVIFPAANGMPEKRIIILAKGRLVNLGCGTGHPSYVMSSSFANQVIAQIELWNAVGTNKYPVGVYTLPKHLDEKVARLQLKKLNAQLTELTDQQAAYIGVTKEGPYKADHYRY.

Substrate contacts are provided by Thr-65, Asp-140, and Glu-200. An NAD(+)-binding site is contributed by Thr-201–Thr-203. Residues Lys-230 and Asp-234 each contribute to the substrate site. Residues Asn-235, Gly-264–Gly-269, Glu-287, Asn-322, Ile-343–His-345, and Asn-393 contribute to the NAD(+) site.

It belongs to the adenosylhomocysteinase family. It depends on NAD(+) as a cofactor.

It is found in the cytoplasm. It catalyses the reaction S-adenosyl-L-homocysteine + H2O = L-homocysteine + adenosine. Its pathway is amino-acid biosynthesis; L-homocysteine biosynthesis; L-homocysteine from S-adenosyl-L-homocysteine: step 1/1. In terms of biological role, may play a key role in the regulation of the intracellular concentration of adenosylhomocysteine. The protein is Adenosylhomocysteinase of Polynucleobacter necessarius subsp. necessarius (strain STIR1).